A 198-amino-acid chain; its full sequence is MPRVAIIIYTLYGHVAATAEAEKKGIEAAGGSADIYQVEETLSPEVVKALGGAPKPDYPIATQDTLTEYDAFLFGIPTRFGNFPAQWKAFWDRTGGLWAKGALHGKVAGCFVSTGTGGGNEATIMNSLSTLAHHGIIFVPLGYKNVFAELTNMDEVHGGSPWGAGTIAGSDGSRSPSALELQVHEIQGKTFYETVAKF.

The signal sequence occupies residues Met1–Ala21. A Flavodoxin-like domain is found at Glu22–Phe191.

This sequence belongs to the WrbA family.

Its subcellular location is the secreted. The polypeptide is Protoplast secreted protein 2 (PST2) (Saccharomyces cerevisiae (strain ATCC 204508 / S288c) (Baker's yeast)).